Here is a 275-residue protein sequence, read N- to C-terminus: Light-independent protochlorophyllide reductase iron-sulfur ATP-binding protein (275 aa).

Residues 12–17 (GIGKST) and lysine 41 each bind ATP. Serine 16 is a binding site for Mg(2+). [4Fe-4S] cluster-binding residues include cysteine 97 and cysteine 131. 182 to 183 (NR) is a binding site for ATP.

The protein belongs to the NifH/BchL/ChlL family. Homodimer. Protochlorophyllide reductase is composed of three subunits; BchL, BchN and BchB. [4Fe-4S] cluster serves as cofactor.

The enzyme catalyses chlorophyllide a + oxidized 2[4Fe-4S]-[ferredoxin] + 2 ADP + 2 phosphate = protochlorophyllide a + reduced 2[4Fe-4S]-[ferredoxin] + 2 ATP + 2 H2O. It participates in porphyrin-containing compound metabolism; bacteriochlorophyll biosynthesis (light-independent). Component of the dark-operative protochlorophyllide reductase (DPOR) that uses Mg-ATP and reduced ferredoxin to reduce ring D of protochlorophyllide (Pchlide) to form chlorophyllide a (Chlide). This reaction is light-independent. The L component serves as a unique electron donor to the NB-component of the complex, and binds Mg-ATP. The chain is Light-independent protochlorophyllide reductase iron-sulfur ATP-binding protein from Chlorobium phaeobacteroides (strain DSM 266 / SMG 266 / 2430).